The following is a 300-amino-acid chain: Kynurenine formamidase (300 aa).

The short motif at 86-90 (HGGYW) is the HGGXW element. S157 acts as the Nucleophile in catalysis. Catalysis depends on residues D244 and H276.

It belongs to the kynurenine formamidase family. Homodimer.

It catalyses the reaction N-formyl-L-kynurenine + H2O = L-kynurenine + formate + H(+). It functions in the pathway amino-acid degradation; L-tryptophan degradation via kynurenine pathway; L-kynurenine from L-tryptophan: step 2/2. Functionally, catalyzes the hydrolysis of N-formyl-L-kynurenine to L-kynurenine, the second step in the kynurenine pathway of tryptophan degradation. Required for elimination of toxic metabolites. The chain is Kynurenine formamidase (KFase) from Drosophila melanogaster (Fruit fly).